A 392-amino-acid chain; its full sequence is Major outer membrane protein P.IA (392 aa).

An N-terminal signal peptide occupies residues 1–19; sequence MRKKLTALVLSALPLAAVA.

The protein belongs to the Gram-negative porin family. In terms of assembly, homotrimer.

It localises to the cell outer membrane. Functionally, serves as a slightly cation selective porin. Major antigen on the gonococcal cell surface and it may have pathogenic properties in addition to its porin activity. The protein is Major outer membrane protein P.IA (porA) of Neisseria meningitidis serogroup B (strain ATCC BAA-335 / MC58).